We begin with the raw amino-acid sequence, 1031 residues long: Error-prone DNA polymerase (1031 aa).

The protein belongs to the DNA polymerase type-C family. DnaE2 subfamily.

Its subcellular location is the cytoplasm. It catalyses the reaction DNA(n) + a 2'-deoxyribonucleoside 5'-triphosphate = DNA(n+1) + diphosphate. In terms of biological role, DNA polymerase involved in damage-induced mutagenesis and translesion synthesis (TLS). It is not the major replicative DNA polymerase. This chain is Error-prone DNA polymerase, found in Pseudomonas savastanoi pv. phaseolicola (strain 1448A / Race 6) (Pseudomonas syringae pv. phaseolicola (strain 1448A / Race 6)).